A 641-amino-acid polypeptide reads, in one-letter code: Threonine--tRNA ligase (641 aa).

The TGS domain maps to 1–61; the sequence is MPIITLPDGT…TQNSHIQIIT (61 aa). The tract at residues 242–533 is catalytic; that stretch reads DHRKLGKKYS…LIENYSGNFP (292 aa). Residues Cys333, His384, and His510 each contribute to the Zn(2+) site.

The protein belongs to the class-II aminoacyl-tRNA synthetase family. In terms of assembly, homodimer. Requires Zn(2+) as cofactor.

It localises to the cytoplasm. The enzyme catalyses tRNA(Thr) + L-threonine + ATP = L-threonyl-tRNA(Thr) + AMP + diphosphate + H(+). Catalyzes the attachment of threonine to tRNA(Thr) in a two-step reaction: L-threonine is first activated by ATP to form Thr-AMP and then transferred to the acceptor end of tRNA(Thr). Also edits incorrectly charged L-seryl-tRNA(Thr). This chain is Threonine--tRNA ligase, found in Prochlorococcus marinus (strain NATL2A).